The primary structure comprises 176 residues: MGYPKEGETIQIQSYKHNGLIHRIWNETTILKATELCIIGANDRTMVTESDGRTWMTREPAICYFHAKQWFNVIGMLRDDGVYYYCNISSPFATDEEAIKYIDYDLDVKVFPDMTYNILDEDEYADHKRQMNYPKEIDSILREHLNTLLHWIHQRKGPFAPEFVDMWYERFLHYTK.

Arg23 (proton donor) is an active-site residue. Mg(2+)-binding residues include Asn87, Asp103, Asp105, Asp107, Asp120, and Glu123.

Belongs to the Ntdp family. Mg(2+) serves as cofactor.

The catalysed reaction is a ribonucleoside 5'-triphosphate + H2O = a ribonucleoside 5'-diphosphate + phosphate + H(+). It catalyses the reaction a ribonucleoside 5'-diphosphate + H2O = a ribonucleoside 5'-phosphate + phosphate + H(+). In terms of biological role, has nucleoside phosphatase activity towards nucleoside triphosphates and nucleoside diphosphates. The polypeptide is Nucleoside triphosphate/diphosphate phosphatase (Bacillus pumilus (strain SAFR-032)).